Consider the following 288-residue polypeptide: Shikimate dehydrogenase (NADP(+)) (288 aa).

Shikimate is bound by residues 15–17 (SKS) and Thr-64. Lys-68 serves as the catalytic Proton acceptor. An NADP(+)-binding site is contributed by Glu-83. Shikimate-binding residues include Asn-92 and Asp-117. NADP(+) is bound by residues 141-145 (GAGGA), 165-170 (NRTLSK), and Met-232. Residue Tyr-234 participates in shikimate binding. Residue Gly-254 participates in NADP(+) binding.

This sequence belongs to the shikimate dehydrogenase family. Homodimer.

It carries out the reaction shikimate + NADP(+) = 3-dehydroshikimate + NADPH + H(+). It functions in the pathway metabolic intermediate biosynthesis; chorismate biosynthesis; chorismate from D-erythrose 4-phosphate and phosphoenolpyruvate: step 4/7. In terms of biological role, involved in the biosynthesis of the chorismate, which leads to the biosynthesis of aromatic amino acids. Catalyzes the reversible NADPH linked reduction of 3-dehydroshikimate (DHSA) to yield shikimate (SA). The chain is Shikimate dehydrogenase (NADP(+)) from Psychrobacter arcticus (strain DSM 17307 / VKM B-2377 / 273-4).